Consider the following 99-residue polypeptide: Sperm protein associated with the nucleus on the X chromosome N4 (99 aa).

Residues 1 to 10 (MEEPTSSTNE) are compositionally biased toward polar residues. Residues 1–99 (MEEPTSSTNE…AGSPQDGGQN (99 aa)) form a disordered region. Residues 11–22 (NKMKSPCESNKR) show a composition bias toward basic and acidic residues. Over residues 23–32 (KVDKKKKNLH) the composition is skewed to basic residues. Over residues 64–78 (SNQLENNQPTESSTD) the composition is skewed to polar residues.

Belongs to the SPAN-X family.

In Homo sapiens (Human), this protein is Sperm protein associated with the nucleus on the X chromosome N4 (SPANXN4).